The primary structure comprises 273 residues: MREKWAFLENTPQDAAINMALDEALLHWHQKGEIPPTLRFYRWNKPTLSIGYFQKVDGKIDLQGIKKHQCQLVRRMTGGSAVLHDDELTYSIVISEKHEKVASSIRQAYFDLSKGIVRAYQLLGIEVDHAHEPSSKGRSNICFEQPAFYELVAKGKKISGNAQIRKRGILLQHGSIPLSMNVEMLFDLFQFPADQMKERKKQRFYERATTINAELGEKQSYERVRNAFQQGFSEILNIELEPITLTEEQWKEVYQIAESNYSENNIKGAVSHV.

Positions 32 to 240 (GEIPPTLRFY…GFSEILNIEL (209 aa)) constitute a BPL/LPL catalytic domain. Cysteine 142 acts as the Acyl-thioester intermediate in catalysis.

This sequence belongs to the octanoyltransferase LipM family. As to quaternary structure, monomer.

The enzyme catalyses octanoyl-[ACP] + L-lysyl-[protein] = N(6)-octanoyl-L-lysyl-[protein] + holo-[ACP] + H(+). The protein operates within protein modification; protein lipoylation via endogenous pathway; protein N(6)-(lipoyl)lysine from octanoyl-[acyl-carrier-protein]. Functionally, catalyzes the transfer of endogenously produced octanoic acid from octanoyl-acyl-carrier-protein onto the lipoyl domain of GcvH, an intermediate carrier during protein lipoylation. This is Octanoyltransferase LipM from Oceanobacillus iheyensis (strain DSM 14371 / CIP 107618 / JCM 11309 / KCTC 3954 / HTE831).